The primary structure comprises 338 residues: Phytanoyl-CoA dioxygenase, peroxisomal (338 aa).

Residues 1-30 (MEQLRAAARLQIVLGHLGRPSAGAVVAHPT) constitute a peroxisome transit peptide. Residues K59 and K108 each carry the N6-succinyllysine modification. Residues K120, M157, 175–177 (HQD), and W193 contribute to the 2-oxoglutarate site. The Fe cation site is built by H175 and D177. N6-succinyllysine is present on residues K231 and K252. H264 is a Fe cation binding site. Residues S266 and R275 each coordinate 2-oxoglutarate. The residue at position 317 (S317) is a Phosphoserine.

This sequence belongs to the PhyH family. Interacts with FKBP52. Interacts with PHYHIP. Requires Fe cation as cofactor. The cofactor is L-ascorbate. ATP serves as cofactor. Mg(2+) is required as a cofactor. As to expression, expressed in liver, kidney, and T-cells, but not in spleen, brain, heart, lung and skeletal muscle.

It is found in the peroxisome. The catalysed reaction is phytanoyl-CoA + 2-oxoglutarate + O2 = 2-hydroxyphytanoyl-CoA + succinate + CO2. It carries out the reaction 3-methylhexadecanoyl-CoA + 2-oxoglutarate + O2 = 2-hydroxy-3-methylhexadecanoyl-CoA + succinate + CO2. The enzyme catalyses hexadecanoyl-CoA + 2-oxoglutarate + O2 = 2-hydroxyhexadecanoyl-CoA + succinate + CO2. It catalyses the reaction octanoyl-CoA + 2-oxoglutarate + O2 = 2-hydroxyoctanoyl-CoA + succinate + CO2. The catalysed reaction is decanoyl-CoA + 2-oxoglutarate + O2 = 2-hydroxydecanoyl-CoA + succinate + CO2. It carries out the reaction 3-methylbutanoyl-CoA + 2-oxoglutarate + O2 = 2-hydroxy-3-methylbutanoyl-CoA + succinate + CO2. The enzyme catalyses heptadecanoyl-CoA + 2-oxoglutarate + O2 = 2-hydroxyheptadecanoyl-CoA + succinate + CO2. It catalyses the reaction eicosanoyl-CoA + 2-oxoglutarate + O2 = 2-hydroxyeicosanoyl-CoA + succinate + CO2. The catalysed reaction is octadecanoyl-CoA + 2-oxoglutarate + O2 = 2-hydroxyoctadecanoyl-CoA + succinate + CO2. It carries out the reaction dodecanoyl-CoA + 2-oxoglutarate + O2 = 2-hydroxydodecanoyl-CoA + succinate + CO2. The enzyme catalyses tetradecanoyl-CoA + 2-oxoglutarate + O2 = 2-hydroxytetradecanoyl-CoA + succinate + CO2. It catalyses the reaction hexanoyl-CoA + 2-oxoglutarate + O2 = 2-hydroxyhexanoyl-CoA + succinate + CO2. The catalysed reaction is butanoyl-CoA + 2-oxoglutarate + O2 = 2-hydroxybutanoyl-CoA + succinate + CO2. It carries out the reaction 3-methylnonanoyl-CoA + 2-oxoglutarate + O2 = 2-hydroxy-3-methylnonanoyl-CoA + succinate + CO2. The enzyme catalyses 3-methylundecanoyl-CoA + 2-oxoglutarate + O2 = 2-hydroxy-3-methylundecanoyl-CoA + succinate + CO2. It catalyses the reaction 3-methyldodecanoyl-CoA + 2-oxoglutarate + O2 = 2-hydroxy-3-methyldodecanoyl-CoA + succinate + CO2. Its pathway is lipid metabolism; fatty acid metabolism. In terms of biological role, catalyzes the 2-hydroxylation of not only racemic phytanoyl-CoA and the isomers of 3-methylhexadecanoyl-CoA, but also a variety of other mono-branched 3-methylacyl-CoA esters (with a chain length of at least seven carbon atoms) and straight-chain acyl-CoA esters (with a chain length longer than four carbon atoms). Does not hydroxylate long and very long straight chain acyl-CoAs or 2-methyl- and 4-methyl-branched acyl-CoAs. This is Phytanoyl-CoA dioxygenase, peroxisomal (PHYH) from Homo sapiens (Human).